A 214-amino-acid polypeptide reads, in one-letter code: Ras-related protein RABA2b (214 aa).

19–26 (GDSGVGKS) provides a ligand contact to GTP. An Effector region motif is present at residues 41–49 (SKSTIGVEF). GTP contacts are provided by residues 67–71 (DTAGQ), 125–128 (NKSD), and 155–156 (SA). 2 S-geranylgeranyl cysteine lipidation sites follow: Cys-211 and Cys-212.

Belongs to the small GTPase superfamily. Rab family. Expressed in root tips.

The protein localises to the endosome membrane. It is found in the golgi apparatus. Its subcellular location is the trans-Golgi network membrane. Its function is as follows. Intracellular vesicle trafficking and protein transport. In Arabidopsis thaliana (Mouse-ear cress), this protein is Ras-related protein RABA2b (RABA2B).